The chain runs to 409 residues: Serine/threonine transporter SstT (409 aa).

Helical transmembrane passes span 24–44, 48–68, 82–102, 142–162, 194–214, 218–238, 292–312, 319–339, and 365–385; these read LALG…AGLF, FVGA…AATI, IIVL…IAGM, AIAN…GAAL, LGIF…ALAG, LLAV…PAIV, IPLG…VLAM, GIQV…VSAC, and VAMQ…SAET.

It belongs to the dicarboxylate/amino acid:cation symporter (DAACS) (TC 2.A.23) family.

Its subcellular location is the cell inner membrane. The catalysed reaction is L-serine(in) + Na(+)(in) = L-serine(out) + Na(+)(out). It carries out the reaction L-threonine(in) + Na(+)(in) = L-threonine(out) + Na(+)(out). Its function is as follows. Involved in the import of serine and threonine into the cell, with the concomitant import of sodium (symport system). This is Serine/threonine transporter SstT from Neisseria meningitidis serogroup C (strain 053442).